The chain runs to 127 residues: Protein ApaG (127 aa).

The 125-residue stretch at 3-127 folds into the ApaG domain; it reads KTSIPDFQIT…FYLIAPLALH (125 aa).

This is Protein ApaG from Bdellovibrio bacteriovorus (strain ATCC 15356 / DSM 50701 / NCIMB 9529 / HD100).